A 447-amino-acid chain; its full sequence is Argininosuccinate synthase (447 aa).

ATP is bound by residues 20–28 (AFSGGLDTS) and alanine 46. Position 102 (tyrosine 102) interacts with L-citrulline. 2 residues coordinate ATP: glycine 132 and threonine 134. L-aspartate is bound by residues threonine 134, asparagine 138, and aspartate 139. Asparagine 138 contacts L-citrulline. Aspartate 139 is an ATP binding site. 2 residues coordinate L-citrulline: arginine 142 and serine 195. Position 197 (aspartate 197) interacts with ATP. Residues threonine 204, glutamate 206, and glutamate 283 each contribute to the L-citrulline site.

This sequence belongs to the argininosuccinate synthase family. Type 2 subfamily. In terms of assembly, homotetramer.

It localises to the cytoplasm. The enzyme catalyses L-citrulline + L-aspartate + ATP = 2-(N(omega)-L-arginino)succinate + AMP + diphosphate + H(+). The protein operates within amino-acid biosynthesis; L-arginine biosynthesis; L-arginine from L-ornithine and carbamoyl phosphate: step 2/3. This Neisseria meningitidis serogroup C / serotype 2a (strain ATCC 700532 / DSM 15464 / FAM18) protein is Argininosuccinate synthase.